We begin with the raw amino-acid sequence, 139 residues long: MATNRRVSRVAELIKREVSQMLLNGIKDDRVGTGMVSVTDVDVSGDLQHAKIYVSIYGTDEAKVETMAGLKSATGYVRSELGARVRLRRTPEVIFLEDRSIERGNKVLALLSQLNHDRPPENLLAVEDNTDEDDESFSE.

Residues 120–139 (PENLLAVEDNTDEDDESFSE) are disordered. Residues 128–139 (DNTDEDDESFSE) are compositionally biased toward acidic residues.

This sequence belongs to the RbfA family. Monomer. Binds 30S ribosomal subunits, but not 50S ribosomal subunits or 70S ribosomes.

The protein resides in the cytoplasm. In terms of biological role, one of several proteins that assist in the late maturation steps of the functional core of the 30S ribosomal subunit. Associates with free 30S ribosomal subunits (but not with 30S subunits that are part of 70S ribosomes or polysomes). Required for efficient processing of 16S rRNA. May interact with the 5'-terminal helix region of 16S rRNA. This Nostoc punctiforme (strain ATCC 29133 / PCC 73102) protein is Ribosome-binding factor A.